A 613-amino-acid chain; its full sequence is Chaperone protein dnaK (613 aa).

It belongs to the heat shock protein 70 family.

Its subcellular location is the plastid. The protein localises to the chloroplast. In terms of biological role, acts as a chaperone. This Phaeodactylum tricornutum (strain CCAP 1055/1) protein is Chaperone protein dnaK.